We begin with the raw amino-acid sequence, 876 residues long: DDB1- and CUL4-associated factor 6 (876 aa).

WD repeat units lie at residues 49–88, 92–133, 139–179, 189–229, and 251–290; these read VHDG…VLTT, GHRA…ETNR, CHYG…SCTK, NCRR…TRAT, and NKSC…AREL. Composition is skewed to basic and acidic residues over residues 288–303 and 312–334; these read RELK…EELR and LRGD…RDGE. 5 disordered regions span residues 288-340, 355-391, 408-485, 498-645, and 658-691; these read RELK…PNVS, EASE…SSPN, LQPS…TEGT, WSST…NPEL, and EDPS…GPGD. S336 is modified (phosphoserine). Polar residues-rich tracts occupy residues 375 to 391 and 409 to 422; these read TNQP…SSPN and QPST…QAQA. Basic and acidic residues predominate over residues 456 to 466; the sequence is HQSDNSNERLS. Low complexity predominate over residues 499 to 510; it reads SSTASSSRGNGS. A compositionally biased stretch (basic and acidic residues) spans 534–544; that stretch reads SETRAPEELSE. Composition is skewed to polar residues over residues 550–562, 571–584, 603–613, and 621–645; these read ENLT…TAQL, DSNS…SQDS, EQASTESATRH, and PSQT…NPEL. S665 bears the Phosphoserine mark. T670 bears the Phosphothreonine mark. S673 carries the post-translational modification Phosphoserine. The IQ domain occupies 692–721; it reads RRSAVARIQEFFRRRKERKEMEELDTLNIR. WD repeat units follow at residues 734–772 and 775–814; these read NSRT…HLML and ADNH…RIFN. Residues S863 and S866 each carry the phosphoserine modification.

As to quaternary structure, interacts with the nuclear receptors NR3C1 and AR in the presence of ligand. Interacts with DDB1, CUL4A and CUL4B.

The protein localises to the nucleus. It participates in protein modification; protein ubiquitination. Functionally, ligand-dependent coactivator of nuclear receptors. Enhance transcriptional activity of the nuclear receptors NR3C1 and AR. May function as a substrate receptor for CUL4-DDB1 E3 ubiquitin-protein ligase complex. This Mus musculus (Mouse) protein is DDB1- and CUL4-associated factor 6 (Dcaf6).